The following is a 446-amino-acid chain: Zinc finger protein BALDIBIS (446 aa).

A disordered region spans residues 20 to 53 (EHIAPNPNPNPNPTSSNSAKRKRNLPGNPDPDAE). S58 bears the Phosphoserine mark. C2H2-type zinc fingers lie at residues 68-90 (FICEVCNKGFKRDQNLQLHRRGH) and 110-140 (YICPEKTCVHHDPARALGDLTGIKKHFSRKH). The short motif at 132 to 139 (IKKHFSRK) is the Nuclear localization signal element. The C2H2-type 2; degenerate zinc-finger motif lies at 145-168 (WKCDKCSKKYAVMSDWKAHSKICG). Positions 147, 150, 163, 167, 174, 176, 189, and 193 each coordinate Zn(2+). A CCHC-type 2; atypical zinc finger spans residues 172–195 (YRCDCGTLFSRKDSFITHRAFCDA). An SHR-binding region spans residues 182–194 (RKDSFITHRAFCD). The interval 425-446 (HNLPDSSPPASTDGTPTADMNQ) is disordered. Residues 427-446 (LPDSSPPASTDGTPTADMNQ) are compositionally biased toward polar residues.

In terms of assembly, binds to RGA and SCL3 competitively in the nucleus. Expressed in roots, especially in vascular initials, cortex, endodermis, and quiescent center (QC).

It is found in the nucleus. Transcription factor that, together with JKD, regulates tissue boundaries and asymmetric cell division in roots by a rapid up-regulation of 'SCARECROW' (SCR), thus controlling the nuclear localization of 'SHORT-ROOT' (SHR) and restricting its action. Confines CYCD6 expression to the cortex-endodermis initial/daughter (CEI/CEID) tissues. Binds DNA via its zinc fingers. Recognizes and binds to SCL3 promoter sequence 5'-AGACAA-3' to promote its expression when in complex with RGA. This Arabidopsis thaliana (Mouse-ear cress) protein is Zinc finger protein BALDIBIS.